Consider the following 133-residue polypeptide: Small ribosomal subunit protein uS8 (133 aa).

This sequence belongs to the universal ribosomal protein uS8 family. Part of the 30S ribosomal subunit. Contacts proteins S5 and S12.

Its function is as follows. One of the primary rRNA binding proteins, it binds directly to 16S rRNA central domain where it helps coordinate assembly of the platform of the 30S subunit. This is Small ribosomal subunit protein uS8 from Koribacter versatilis (strain Ellin345).